The sequence spans 319 residues: Large ribosomal subunit protein uL10 (319 aa).

The disordered stretch occupies residues 286-319 (AGDSGASAAPKEEEKAAEPEEESDEEMGFSLFDD). A compositionally biased stretch (acidic residues) spans 304-319 (PEEESDEEMGFSLFDD).

It belongs to the universal ribosomal protein uL10 family. P0 forms a pentameric complex by interaction with dimers of P1 and P2. Phosphorylated.

Ribosomal protein P0 is the functional equivalent of E.coli protein L10. The chain is Large ribosomal subunit protein uL10 (RP-P0) from Zea mays (Maize).